The chain runs to 328 residues: Gonadotropin-releasing hormone receptor (328 aa).

Residues 1-38 are Extracellular-facing; it reads MANSASPEQNQNHCSAINSSILLTQGNLPTLTLSGKIR. The N-linked (GlcNAc...) asparagine glycan is linked to asparagine 18. Residues 39-58 form a helical membrane-spanning segment; sequence VTVTFFLFLLSTAFNASFLL. At 59–77 the chain is on the cytoplasmic side; that stretch reads KLQKWTQRKEKGKKLSRMK. Residues 78–97 traverse the membrane as a helical segment; it reads VLLKHLTLANLLETLIVMPL. Topologically, residues 98–115 are extracellular; that stretch reads DGMWNITVQWYAGEFLCK. N-linked (GlcNAc...) asparagine glycosylation is present at asparagine 102. A disulfide bond links cysteine 114 and cysteine 196. A helical membrane pass occupies residues 116–137; the sequence is VLSYLKLFSMYAPAFMMVVISL. Over 138–164 the chain is Cytoplasmic; the sequence is DRSLAITRPLAVKSNSRLGRFMIGLAW. Residues 165-184 form a helical membrane-spanning segment; that stretch reads LLSSIFAGPQLYIFRMIHLA. Residues 185–212 lie on the Extracellular side of the membrane; it reads DSSGQTEGFSQCVTHGSFPQWWHQAFYN. A helical membrane pass occupies residues 213 to 232; that stretch reads FFTFSCLFIIPLLIMLICNA. Over 233–281 the chain is Cytoplasmic; that stretch reads KIMFTLTRVLQQDPHNLQLNQSKNNIPRARLRTLKMTVAFAASFIVCWT. A helical membrane pass occupies residues 282-300; it reads PYYVLGIWYWFDPEMVNRV. The Extracellular segment spans residues 301–306; that stretch reads SDPVNH. The helical transmembrane segment at 307-326 threads the bilayer; it reads FFFLFAFLNPCFDPLIYGYF. The Cytoplasmic segment spans residues 327 to 328; the sequence is SL.

It belongs to the G-protein coupled receptor 1 family. As to expression, pituitary gland.

Its subcellular location is the cell membrane. Receptor for gonadotropin releasing hormone (GnRH) that mediates the action of GnRH to stimulate the secretion of the gonadotropic hormones luteinizing hormone (LH) and follicle-stimulating hormone (FSH). This receptor mediates its action by association with G-proteins that activate a phosphatidylinositol-calcium second messenger system. The sequence is that of Gonadotropin-releasing hormone receptor (GNRHR) from Sus scrofa (Pig).